Reading from the N-terminus, the 206-residue chain is Protein PH0010 (206 aa).

The AMMECR1 domain occupies 8-202 (EWGEFLVRLA…EEYPRGPIKR (195 aa)).

This chain is Protein PH0010, found in Pyrococcus horikoshii (strain ATCC 700860 / DSM 12428 / JCM 9974 / NBRC 100139 / OT-3).